We begin with the raw amino-acid sequence, 250 residues long: DNA polymerase sliding clamp (250 aa).

This sequence belongs to the PCNA family. In terms of assembly, homotrimer. The subunits circularize to form a toroid; DNA passes through its center. Replication factor C (RFC) is required to load the toroid on the DNA.

Its function is as follows. Sliding clamp subunit that acts as a moving platform for DNA processing. Responsible for tethering the catalytic subunit of DNA polymerase and other proteins to DNA during high-speed replication. This chain is DNA polymerase sliding clamp, found in Methanococcus maripaludis (strain DSM 14266 / JCM 13030 / NBRC 101832 / S2 / LL).